Consider the following 270-residue polypeptide: MGGQVRVAIVGAGGRMGRTLIEAAYHQEHILLGAAIERAGSSLVGVDAGELAGVGKLNVIIMDSLDYATDDFDVLIDFTAPDASIVHLDWCVRHKKAMVIGTTGFNQAQKIQINAFAEQTPVVMAPNMSVGVNLMWKLLELAAEVMGDYTDIEIIEGHHRHKKDAPSGTALKMGEVIAKTLGRDLEKCAVYGREGITGERDRETIGFATIRAGDLVGEHTAMFADIGERLEITHKASSRMTFANGAMRAARWVVEQKPGLYDMQQVLGLN.

Residues 11 to 16 (GAGGRM) and Glu37 each bind NAD(+). Position 38 (Arg38) interacts with NADP(+). NAD(+) contacts are provided by residues 101 to 103 (GTT) and 125 to 128 (APNM). His158 acts as the Proton donor/acceptor in catalysis. His159 contributes to the (S)-2,3,4,5-tetrahydrodipicolinate binding site. Residue Lys162 is the Proton donor of the active site. A (S)-2,3,4,5-tetrahydrodipicolinate-binding site is contributed by 168–169 (GT).

It belongs to the DapB family.

The protein localises to the cytoplasm. The catalysed reaction is (S)-2,3,4,5-tetrahydrodipicolinate + NAD(+) + H2O = (2S,4S)-4-hydroxy-2,3,4,5-tetrahydrodipicolinate + NADH + H(+). It catalyses the reaction (S)-2,3,4,5-tetrahydrodipicolinate + NADP(+) + H2O = (2S,4S)-4-hydroxy-2,3,4,5-tetrahydrodipicolinate + NADPH + H(+). Its pathway is amino-acid biosynthesis; L-lysine biosynthesis via DAP pathway; (S)-tetrahydrodipicolinate from L-aspartate: step 4/4. Catalyzes the conversion of 4-hydroxy-tetrahydrodipicolinate (HTPA) to tetrahydrodipicolinate. The polypeptide is 4-hydroxy-tetrahydrodipicolinate reductase (Shewanella putrefaciens (strain CN-32 / ATCC BAA-453)).